Here is a 63-residue protein sequence, read N- to C-terminus: Prokaryotic ubiquitin-like protein Pup (63 aa).

Residues 1–28 (MPQEFEQIRSADQPLDSEESAPVAGART) form a disordered region. The tract at residues 19–57 (ESAPVAGARTDDTVDALDAVLDDIESVLETNAEEYVGSF) is ARC ATPase binding. Residue Glu63 forms an Isoglutamyl lysine isopeptide (Glu-Lys) (interchain with K-? in acceptor proteins) linkage.

This sequence belongs to the prokaryotic ubiquitin-like protein family. In terms of assembly, strongly interacts with the proteasome-associated ATPase ARC through a hydrophobic interface; the interacting region of Pup lies in its C-terminal half. There is one Pup binding site per ARC hexamer ring.

Its pathway is protein degradation; proteasomal Pup-dependent pathway. In terms of biological role, protein modifier that is covalently attached to lysine residues of substrate proteins, thereby targeting them for proteasomal degradation. The tagging system is termed pupylation. This chain is Prokaryotic ubiquitin-like protein Pup, found in Bifidobacterium dentium (strain ATCC 27534 / DSM 20436 / JCM 1195 / Bd1).